We begin with the raw amino-acid sequence, 329 residues long: G-protein coupled bile acid receptor 1 (329 aa).

Residues Met1–Gly15 are Extracellular-facing. The N-linked (GlcNAc...) asparagine glycan is linked to Asn5. Residues Val16 to Leu36 traverse the membrane as a helical segment. Topologically, residues Gly37–Ala49 are cytoplasmic. Residues Gly50 to Leu70 form a helical membrane-spanning segment. Topologically, residues Pro71–Cys84 are extracellular. Cys84 and Cys154 are oxidised to a cystine. A helical transmembrane segment spans residues Leu85–Val105. At His106 to Arg124 the chain is on the cytoplasmic side. Residues Leu125–Trp145 traverse the membrane as a helical segment. Residues Asn146–Tyr164 lie on the Extracellular side of the membrane. Residue Asn153 is glycosylated (N-linked (GlcNAc...) asparagine). The helical transmembrane segment at Leu165 to Val185 threads the bilayer. The Cytoplasmic segment spans residues Arg186–Thr229. The helical transmembrane segment at Leu230–Tyr250 threads the bilayer. The Extracellular segment spans residues Glu251–Thr260. Residues Leu261–Leu281 form a helical membrane-spanning segment. At Gly282–Asn329 the chain is on the cytoplasmic side.

Belongs to the G-protein coupled receptor 1 family.

The protein localises to the cell membrane. Its function is as follows. Receptor for bile acid. Bile acid-binding induces its internalization, activation of extracellular signal-regulated kinase and intracellular cAMP production. May be involved in the suppression of macrophage functions by bile acids. Involved in bile acid promoted GLP1R secretion. The sequence is that of G-protein coupled bile acid receptor 1 (Gpbar1) from Mus musculus (Mouse).